The primary structure comprises 77 residues: MSFMSEAFKYLAASIAAGLAALAAALGNGKVISKTLEGMARQPESADNLRATMFIGVGLIEAVPILAIVVAFLILFL.

2 helical membrane passes run 7 to 27 (AFKY…AALG) and 57 to 77 (VGLI…ILFL).

The protein belongs to the ATPase C chain family. F-type ATPases have 2 components, F(1) - the catalytic core - and F(0) - the membrane proton channel. F(1) has five subunits: alpha(3), beta(3), gamma(1), delta(1), epsilon(1). F(0) has three main subunits: a(1), b(2) and c(10-14). The alpha and beta chains form an alternating ring which encloses part of the gamma chain. F(1) is attached to F(0) by a central stalk formed by the gamma and epsilon chains, while a peripheral stalk is formed by the delta and b chains.

The protein localises to the cell membrane. F(1)F(0) ATP synthase produces ATP from ADP in the presence of a proton or sodium gradient. F-type ATPases consist of two structural domains, F(1) containing the extramembraneous catalytic core and F(0) containing the membrane proton channel, linked together by a central stalk and a peripheral stalk. During catalysis, ATP synthesis in the catalytic domain of F(1) is coupled via a rotary mechanism of the central stalk subunits to proton translocation. In terms of biological role, key component of the F(0) channel; it plays a direct role in translocation across the membrane. A homomeric c-ring of between 10-14 subunits forms the central stalk rotor element with the F(1) delta and epsilon subunits. The sequence is that of ATP synthase subunit c from Lactobacillus helveticus (strain DPC 4571).